The chain runs to 251 residues: Precorrin-4 C(11)-methyltransferase (251 aa).

The protein belongs to the precorrin methyltransferase family.

The catalysed reaction is precorrin-4 + S-adenosyl-L-methionine = precorrin-5 + S-adenosyl-L-homocysteine. It functions in the pathway cofactor biosynthesis; adenosylcobalamin biosynthesis; cob(II)yrinate a,c-diamide from precorrin-2 (aerobic route): step 4/10. Catalyzes the methylation of C-11 in precorrin-4 to form precorrin-5. This is Precorrin-4 C(11)-methyltransferase (cobM) from Mycobacterium tuberculosis (strain CDC 1551 / Oshkosh).